The following is a 95-amino-acid chain: Translation initiation factor IF-1 (95 aa).

The region spanning Met-1–Lys-72 is the S1-like domain. The interval Arg-70–Arg-95 is disordered. The span at Arg-86–Arg-95 shows a compositional bias: pro residues.

It belongs to the IF-1 family. Component of the 30S ribosomal translation pre-initiation complex which assembles on the 30S ribosome in the order IF-2 and IF-3, IF-1 and N-formylmethionyl-tRNA(fMet); mRNA recruitment can occur at any time during PIC assembly.

It is found in the cytoplasm. In terms of biological role, one of the essential components for the initiation of protein synthesis. Stabilizes the binding of IF-2 and IF-3 on the 30S subunit to which N-formylmethionyl-tRNA(fMet) subsequently binds. Helps modulate mRNA selection, yielding the 30S pre-initiation complex (PIC). Upon addition of the 50S ribosomal subunit IF-1, IF-2 and IF-3 are released leaving the mature 70S translation initiation complex. The protein is Translation initiation factor IF-1 of Rhodospirillum rubrum (strain ATCC 11170 / ATH 1.1.1 / DSM 467 / LMG 4362 / NCIMB 8255 / S1).